An 83-amino-acid chain; its full sequence is Translational regulator CsrA (83 aa).

The protein belongs to the CsrA/RsmA family. In terms of assembly, homodimer; the beta-strands of each monomer intercalate to form a hydrophobic core, while the alpha-helices form wings that extend away from the core.

It is found in the cytoplasm. Functionally, a translational regulator that binds mRNA to regulate translation initiation and/or mRNA stability. Usually binds in the 5'-UTR at or near the Shine-Dalgarno sequence preventing ribosome-binding, thus repressing translation. Its main target seems to be the major flagellin gene, while its function is anatagonized by FliW. This Thermotoga petrophila (strain ATCC BAA-488 / DSM 13995 / JCM 10881 / RKU-1) protein is Translational regulator CsrA.